Here is a 137-residue protein sequence, read N- to C-terminus: Small ribosomal subunit protein uS9 (137 aa).

It belongs to the universal ribosomal protein uS9 family.

The polypeptide is Small ribosomal subunit protein uS9 (rps9) (Saccharolobus solfataricus (strain ATCC 35092 / DSM 1617 / JCM 11322 / P2) (Sulfolobus solfataricus)).